We begin with the raw amino-acid sequence, 659 residues long: DNA ligase (659 aa).

NAD(+) is bound by residues 32-36, 81-82, and Glu-111; these read DFEYD and SL. Lys-113 functions as the N6-AMP-lysine intermediate in the catalytic mechanism. 4 residues coordinate NAD(+): Arg-134, Glu-168, Lys-280, and Lys-304. 4 residues coordinate Zn(2+): Cys-398, Cys-401, Cys-416, and Cys-421. The BRCT domain maps to 585–655; sequence ETNSIYFQKR…KELNIPIINE (71 aa).

Belongs to the NAD-dependent DNA ligase family. LigA subfamily. Mg(2+) serves as cofactor. It depends on Mn(2+) as a cofactor.

It carries out the reaction NAD(+) + (deoxyribonucleotide)n-3'-hydroxyl + 5'-phospho-(deoxyribonucleotide)m = (deoxyribonucleotide)n+m + AMP + beta-nicotinamide D-nucleotide.. In terms of biological role, DNA ligase that catalyzes the formation of phosphodiester linkages between 5'-phosphoryl and 3'-hydroxyl groups in double-stranded DNA using NAD as a coenzyme and as the energy source for the reaction. It is essential for DNA replication and repair of damaged DNA. This is DNA ligase from Mycoplasma genitalium (strain ATCC 33530 / DSM 19775 / NCTC 10195 / G37) (Mycoplasmoides genitalium).